The chain runs to 121 residues: Large ribosomal subunit protein uL14 (121 aa).

It belongs to the universal ribosomal protein uL14 family. As to quaternary structure, part of the 50S ribosomal subunit. Forms a cluster with proteins L3 and L19. In the 70S ribosome, L14 and L19 interact and together make contacts with the 16S rRNA in bridges B5 and B8.

Binds to 23S rRNA. Forms part of two intersubunit bridges in the 70S ribosome. This Synechococcus sp. (strain CC9902) protein is Large ribosomal subunit protein uL14.